A 194-amino-acid chain; its full sequence is Thymidine kinase (194 aa).

Residues 15 to 22 (GSMFSGKS) and 88 to 91 (DEVQ) contribute to the ATP site. Glutamate 89 acts as the Proton acceptor in catalysis. Zn(2+) is bound by residues cysteine 145, cysteine 148, cysteine 183, and histidine 186.

This sequence belongs to the thymidine kinase family. In terms of assembly, homotetramer.

Its subcellular location is the cytoplasm. It carries out the reaction thymidine + ATP = dTMP + ADP + H(+). The sequence is that of Thymidine kinase from Bacillus licheniformis (strain ATCC 14580 / DSM 13 / JCM 2505 / CCUG 7422 / NBRC 12200 / NCIMB 9375 / NCTC 10341 / NRRL NRS-1264 / Gibson 46).